Reading from the N-terminus, the 323-residue chain is Sphingolipid delta(4)-desaturase/C4-monooxygenase DES2 (323 aa).

A lipid anchor (N-myristoyl glycine) is attached at Gly-2. 2 helical membrane-spanning segments follow: residues 45–65 (WTVTAMVLAQLLACWLAQGLA) and 68–88 (WLFFWAYAFGGCVNHSLTLAI). Residues 89–93 (HDISH) carry the Histidine box-1 motif. A required for C4-hydroxylase activity region spans residues 95–99 (TAFGT). Residues 128-132 (HVDHH) carry the Histidine box-2 motif. Residues 209 to 231 (MVYLLASSLLGLGLHPISGHFVA) form a helical membrane-spanning segment. Positions 259-263 (HMEHH) match the Histidine box-3 motif.

The protein belongs to the fatty acid desaturase type 1 family. DEGS subfamily.

It is found in the endoplasmic reticulum membrane. It carries out the reaction a dihydroceramide + 2 Fe(II)-[cytochrome b5] + O2 + 2 H(+) = a phytoceramide + 2 Fe(III)-[cytochrome b5] + H2O. It catalyses the reaction an N-acylsphinganine + 2 Fe(II)-[cytochrome b5] + O2 + 2 H(+) = an N-acylsphing-4-enine + 2 Fe(III)-[cytochrome b5] + 2 H2O. The catalysed reaction is N-octanoylsphinganine + 2 Fe(II)-[cytochrome b5] + O2 + 2 H(+) = N-octanoyl-4-hydroxysphinganine + 2 Fe(III)-[cytochrome b5] + H2O. The enzyme catalyses an N-acylsphinganine + 2 Fe(II)-[cytochrome b5] + O2 + 2 H(+) = an N-acyl-(4R)-4-hydroxysphinganine + 2 Fe(III)-[cytochrome b5] + H2O. It functions in the pathway membrane lipid metabolism; sphingolipid biosynthesis. Bifunctional enzyme which acts both as a sphingolipid delta(4)-desaturase and a sphingolipid C4-monooxygenase. The protein is Sphingolipid delta(4)-desaturase/C4-monooxygenase DES2 of Bos taurus (Bovine).